The following is a 223-amino-acid chain: Putative archaetidylserine decarboxylase proenzyme (223 aa).

Catalysis depends on Ser183, which acts as the Schiff-base intermediate with substrate; via pyruvic acid. Ser183 bears the Pyruvic acid (Ser); by autocatalysis mark.

It belongs to the phosphatidylserine decarboxylase family. PSD-A subfamily. In terms of assembly, heterodimer of a large membrane-associated beta subunit and a small pyruvoyl-containing alpha subunit. Pyruvate is required as a cofactor. Is synthesized initially as an inactive proenzyme. Formation of the active enzyme involves a self-maturation process in which the active site pyruvoyl group is generated from an internal serine residue via an autocatalytic post-translational modification. Two non-identical subunits are generated from the proenzyme in this reaction, and the pyruvate is formed at the N-terminus of the alpha chain, which is derived from the carboxyl end of the proenzyme. The post-translation cleavage follows an unusual pathway, termed non-hydrolytic serinolysis, in which the side chain hydroxyl group of the serine supplies its oxygen atom to form the C-terminus of the beta chain, while the remainder of the serine residue undergoes an oxidative deamination to produce ammonia and the pyruvoyl prosthetic group on the alpha chain.

It is found in the cell membrane. The catalysed reaction is archaetidylserine + H(+) = archaetidylethanolamine + CO2. Its function is as follows. Catalyzes the formation of archaetidylethanolamine (PtdEtn) from archaetidylserine (PtdSer). This is Putative archaetidylserine decarboxylase proenzyme from Methanothermobacter thermautotrophicus (strain ATCC 29096 / DSM 1053 / JCM 10044 / NBRC 100330 / Delta H) (Methanobacterium thermoautotrophicum).